The sequence spans 307 residues: Thymidylate synthase (307 aa).

DUMP is bound by residues arginine 26 and 160–161; that span reads RR. The active-site Nucleophile is the cysteine 180. Residues 209–212, asparagine 220, and 250–252 contribute to the dUMP site; these read RSCD and HIY. Aspartate 212 is a (6R)-5,10-methylene-5,6,7,8-tetrahydrofolate binding site. Alanine 306 is a (6R)-5,10-methylene-5,6,7,8-tetrahydrofolate binding site.

It belongs to the thymidylate synthase family. Bacterial-type ThyA subfamily. As to quaternary structure, homodimer.

It localises to the cytoplasm. The catalysed reaction is dUMP + (6R)-5,10-methylene-5,6,7,8-tetrahydrofolate = 7,8-dihydrofolate + dTMP. It functions in the pathway pyrimidine metabolism; dTTP biosynthesis. In terms of biological role, catalyzes the reductive methylation of 2'-deoxyuridine-5'-monophosphate (dUMP) to 2'-deoxythymidine-5'-monophosphate (dTMP) while utilizing 5,10-methylenetetrahydrofolate (mTHF) as the methyl donor and reductant in the reaction, yielding dihydrofolate (DHF) as a by-product. This enzymatic reaction provides an intracellular de novo source of dTMP, an essential precursor for DNA biosynthesis. The chain is Thymidylate synthase from Rhizobium rhizogenes (strain K84 / ATCC BAA-868) (Agrobacterium radiobacter).